A 197-amino-acid polypeptide reads, in one-letter code: UPF0319 protein VP0761 (197 aa).

The N-terminal stretch at 1–20 (MKKTTTLLGICAILSAPAFA) is a signal peptide.

This sequence belongs to the UPF0319 family.

The protein is UPF0319 protein VP0761 of Vibrio parahaemolyticus serotype O3:K6 (strain RIMD 2210633).